The primary structure comprises 167 residues: Transcriptional regulator MraZ (167 aa).

SpoVT-AbrB domains lie at 8–51 and 92–135; these read ESNH…YGDH and SFPT…NPAT.

This sequence belongs to the MraZ family. In terms of assembly, forms oligomers.

Its subcellular location is the cytoplasm. The protein resides in the nucleoid. This is Transcriptional regulator MraZ from Ruegeria pomeroyi (strain ATCC 700808 / DSM 15171 / DSS-3) (Silicibacter pomeroyi).